The chain runs to 243 residues: Biosynthetic peptidoglycan transglycosylase (243 aa).

The chain crosses the membrane as a helical span at residues 21–43 (LLIVSLVSALMSVLQVIVFRFVD).

Belongs to the glycosyltransferase 51 family.

It is found in the cell inner membrane. It catalyses the reaction [GlcNAc-(1-&gt;4)-Mur2Ac(oyl-L-Ala-gamma-D-Glu-L-Lys-D-Ala-D-Ala)](n)-di-trans,octa-cis-undecaprenyl diphosphate + beta-D-GlcNAc-(1-&gt;4)-Mur2Ac(oyl-L-Ala-gamma-D-Glu-L-Lys-D-Ala-D-Ala)-di-trans,octa-cis-undecaprenyl diphosphate = [GlcNAc-(1-&gt;4)-Mur2Ac(oyl-L-Ala-gamma-D-Glu-L-Lys-D-Ala-D-Ala)](n+1)-di-trans,octa-cis-undecaprenyl diphosphate + di-trans,octa-cis-undecaprenyl diphosphate + H(+). It functions in the pathway cell wall biogenesis; peptidoglycan biosynthesis. Functionally, peptidoglycan polymerase that catalyzes glycan chain elongation from lipid-linked precursors. This Xylella fastidiosa (strain Temecula1 / ATCC 700964) protein is Biosynthetic peptidoglycan transglycosylase.